A 207-amino-acid chain; its full sequence is Thymidine kinase (207 aa).

Residues 15–22 and 88–91 each bind ATP; these read GCMFSGKS and DEIQ. E89 serves as the catalytic Proton acceptor. Residues C145, C148, C183, and H186 each coordinate Zn(2+). Positions 184-198 are enriched in basic residues; the sequence is RHHHEVPGKPKKRYN. The segment at 184–207 is disordered; it reads RHHHEVPGKPKKRYNHPLAGHTGE.

It belongs to the thymidine kinase family. In terms of assembly, homotetramer.

It is found in the cytoplasm. The enzyme catalyses thymidine + ATP = dTMP + ADP + H(+). The polypeptide is Thymidine kinase (Geobacillus kaustophilus (strain HTA426)).